A 634-amino-acid chain; its full sequence is Chaperone protein DnaK 2 (634 aa).

Position 197 is a phosphothreonine; by autocatalysis (T197). Residues 600–620 (ASAEASANAQAGPSSSSSSSS) are compositionally biased toward low complexity. The disordered stretch occupies residues 600 to 634 (ASAEASANAQAGPSSSSSSSSGDDDVIDAEFSESK). The segment covering 621–634 (GDDDVIDAEFSESK) has biased composition (acidic residues).

This sequence belongs to the heat shock protein 70 family.

Its function is as follows. Acts as a chaperone. In Synechococcus sp. (strain ATCC 27144 / PCC 6301 / SAUG 1402/1) (Anacystis nidulans), this protein is Chaperone protein DnaK 2.